A 1444-amino-acid chain; its full sequence is Cleavage and polyadenylation specificity factor subunit 1 (1444 aa).

4 disordered regions span residues 406–439 (PPASTAREAADKEEPPSKKKRVDATTGWSGSKSV), 549–571 (EETLKGEGTEPEPGAPEAEDDGR), 716–778 (GGVR…PAPF), and 902–924 (FREKKPKPSKKKAEGGSTEEGTG). A compositionally biased stretch (basic and acidic residues) spans 413-422 (EAADKEEPPS). Phosphoserine is present on residues serine 757 and serine 767. The segment covering 759–776 (SKEEARRSSQPPADRDPA) has biased composition (basic and acidic residues). Residues 894 to 909 (KKVPHNINFREKKPKP) carry the Nuclear localization signal motif.

The protein belongs to the CPSF1 family. In terms of assembly, component of the cleavage and polyadenylation specificity factor (CPSF) complex, composed of CPSF1, CPSF2, CPSF3, CPSF4 and FIP1L1. Found in a complex with CPSF1, FIP1L1 and PAPOLA. Interacts with FIP1L1, TENT2/GLD2 and SRRM1. Interacts with TUT1; the interaction is direct and mediates the recruitment of the CPSF complex on the 3'UTR of selected pre-mRNAs. The N-terminus is blocked.

It localises to the nucleus. It is found in the nucleoplasm. Its function is as follows. Component of the cleavage and polyadenylation specificity factor (CPSF) complex that plays a key role in pre-mRNA 3'-end formation, recognizing the AAUAAA signal sequence and interacting with poly(A) polymerase and other factors to bring about cleavage and poly(A) addition. This subunit is involved in the RNA recognition step of the polyadenylation reaction. May play a role in eye morphogenesis and the development of retinal ganglion cell projections to the midbrain. This is Cleavage and polyadenylation specificity factor subunit 1 (CPSF1) from Bos taurus (Bovine).